A 122-amino-acid polypeptide reads, in one-letter code: Large ribosomal subunit protein uL14 (122 aa).

It belongs to the universal ribosomal protein uL14 family. In terms of assembly, part of the 50S ribosomal subunit. Forms a cluster with proteins L3 and L19. In the 70S ribosome, L14 and L19 interact and together make contacts with the 16S rRNA in bridges B5 and B8.

Binds to 23S rRNA. Forms part of two intersubunit bridges in the 70S ribosome. The polypeptide is Large ribosomal subunit protein uL14 (Neisseria meningitidis serogroup C (strain 053442)).